The chain runs to 434 residues: ATP-dependent protease ATPase subunit HslU (434 aa).

ATP contacts are provided by residues Val-18, 60–65, Asp-247, Glu-312, and Arg-384; that span reads GVGKTE.

It belongs to the ClpX chaperone family. HslU subfamily. A double ring-shaped homohexamer of HslV is capped on each side by a ring-shaped HslU homohexamer. The assembly of the HslU/HslV complex is dependent on binding of ATP.

The protein localises to the cytoplasm. In terms of biological role, ATPase subunit of a proteasome-like degradation complex; this subunit has chaperone activity. The binding of ATP and its subsequent hydrolysis by HslU are essential for unfolding of protein substrates subsequently hydrolyzed by HslV. HslU recognizes the N-terminal part of its protein substrates and unfolds these before they are guided to HslV for hydrolysis. The protein is ATP-dependent protease ATPase subunit HslU of Bradyrhizobium sp. (strain BTAi1 / ATCC BAA-1182).